The primary structure comprises 235 residues: Protein shisa-5 (235 aa).

Residues 1–26 form the signal peptide; that stretch reads MAAPAPSLWTLLLLLLLLPPPPGAHG. The Extracellular portion of the chain corresponds to 27–105; sequence ELCRPFGEDN…SSFDSDPMSG (79 aa). A helical transmembrane segment spans residues 106–126; the sequence is FGATVAIGVTIFVVFIATIII. The Cytoplasmic portion of the chain corresponds to 127–235; that stretch reads CFTCSCCCLY…TYMDSLKTIP (109 aa). The tract at residues 157 to 235 is disordered; that stretch reads APYPQPQPQP…TYMDSLKTIP (79 aa). Composition is skewed to pro residues over residues 159 to 172 and 181 to 211; these read YPQP…PSYP and PMPP…PPPY.

This sequence belongs to the shisa family. As to quaternary structure, interacts with PDCD6; PDCD6 can stabilize SHISA5. In terms of tissue distribution, spleen and thymus.

It localises to the endoplasmic reticulum membrane. Its subcellular location is the nucleus membrane. Functionally, can induce apoptosis in a caspase-dependent manner and plays a role in p53/TP53-dependent apoptosis. The protein is Protein shisa-5 (Shisa5) of Mus musculus (Mouse).